Here is a 103-residue protein sequence, read N- to C-terminus: Large ribosomal subunit protein uL24 (103 aa).

Belongs to the universal ribosomal protein uL24 family. In terms of assembly, part of the 50S ribosomal subunit.

Functionally, one of two assembly initiator proteins, it binds directly to the 5'-end of the 23S rRNA, where it nucleates assembly of the 50S subunit. Its function is as follows. One of the proteins that surrounds the polypeptide exit tunnel on the outside of the subunit. This chain is Large ribosomal subunit protein uL24, found in Ruegeria pomeroyi (strain ATCC 700808 / DSM 15171 / DSS-3) (Silicibacter pomeroyi).